We begin with the raw amino-acid sequence, 96 residues long: Pyrimidine/purine nucleoside phosphorylase (96 aa).

It belongs to the nucleoside phosphorylase PpnP family.

It carries out the reaction a purine D-ribonucleoside + phosphate = a purine nucleobase + alpha-D-ribose 1-phosphate. The catalysed reaction is adenosine + phosphate = alpha-D-ribose 1-phosphate + adenine. It catalyses the reaction cytidine + phosphate = cytosine + alpha-D-ribose 1-phosphate. The enzyme catalyses guanosine + phosphate = alpha-D-ribose 1-phosphate + guanine. It carries out the reaction inosine + phosphate = alpha-D-ribose 1-phosphate + hypoxanthine. The catalysed reaction is thymidine + phosphate = 2-deoxy-alpha-D-ribose 1-phosphate + thymine. It catalyses the reaction uridine + phosphate = alpha-D-ribose 1-phosphate + uracil. The enzyme catalyses xanthosine + phosphate = alpha-D-ribose 1-phosphate + xanthine. Functionally, catalyzes the phosphorolysis of diverse nucleosides, yielding D-ribose 1-phosphate and the respective free bases. Can use uridine, adenosine, guanosine, cytidine, thymidine, inosine and xanthosine as substrates. Also catalyzes the reverse reactions. The protein is Pyrimidine/purine nucleoside phosphorylase of Serratia proteamaculans (strain 568).